A 387-amino-acid chain; its full sequence is Cytochrome b (387 aa).

4 helical membrane passes run 32-52 (FGSLLACVLVIQIVIGILLAC), 76-98 (FLLRAFHANGASFFFIFLYLHIG), 113-133 (TWNIGVIIFLLTIITAFLGYC), and 179-199 (FFSLHYLMPFVIAALSVMHLI). Heme b contacts are provided by H82 and H96. Positions 183 and 197 each coordinate heme b. Residue H202 participates in a ubiquinone binding. 4 helical membrane passes run 225–245 (YLIKDLITIFIFLIGINYMAF), 289–309 (QLGVIAMLLSILVLLLLPLLD), 321–341 (FGKFFFWTFVADFVILAWIGG), and 348–368 (FITIGAIATIFYFSYFFILIP).

The protein belongs to the cytochrome b family. As to quaternary structure, fungal cytochrome b-c1 complex contains 10 subunits; 3 respiratory subunits, 2 core proteins and 5 low-molecular weight proteins. Cytochrome b-c1 complex is a homodimer. Heme b is required as a cofactor.

It is found in the mitochondrion inner membrane. In terms of biological role, component of the ubiquinol-cytochrome c reductase complex (complex III or cytochrome b-c1 complex) that is part of the mitochondrial respiratory chain. The b-c1 complex mediates electron transfer from ubiquinol to cytochrome c. Contributes to the generation of a proton gradient across the mitochondrial membrane that is then used for ATP synthesis. This is Cytochrome b (cob) from Schizosaccharomyces pombe (strain 972 / ATCC 24843) (Fission yeast).